Reading from the N-terminus, the 352-residue chain is S-adenosylmethionine:tRNA ribosyltransferase-isomerase (352 aa).

It belongs to the QueA family. Monomer.

It localises to the cytoplasm. It catalyses the reaction 7-aminomethyl-7-carbaguanosine(34) in tRNA + S-adenosyl-L-methionine = epoxyqueuosine(34) in tRNA + adenine + L-methionine + 2 H(+). It participates in tRNA modification; tRNA-queuosine biosynthesis. In terms of biological role, transfers and isomerizes the ribose moiety from AdoMet to the 7-aminomethyl group of 7-deazaguanine (preQ1-tRNA) to give epoxyqueuosine (oQ-tRNA). This chain is S-adenosylmethionine:tRNA ribosyltransferase-isomerase, found in Syntrophomonas wolfei subsp. wolfei (strain DSM 2245B / Goettingen).